Here is a 247-residue protein sequence, read N- to C-terminus: Calpain small subunit 2 (247 aa).

Positions 88, 91, 93, 131, 133, 135, 137, 142, 161, 163, 165, and 204 each coordinate Ca(2+). EF-hand domains follow at residues 118–151 (FSLD…NNIK), 148–183 (NNIK…AGFQ), 184–212 (LNEQ…ISCL), and 213–247 (VRLD…TMYS).

Heterodimer of a large (catalytic) and a small (regulatory) subunit.

The protein resides in the cytoplasm. Its subcellular location is the cell membrane. In terms of biological role, calcium-regulated non-lysosomal thiol-protease which catalyzes limited proteolysis of substrates involved in cytoskeletal remodeling and signal transduction. This small subunit may act as a tissue-specific chaperone of the large subunit, possibly by helping it fold into its correct conformation for activity. The sequence is that of Calpain small subunit 2 (Capns2) from Mus musculus (Mouse).